The following is a 434-amino-acid chain: Trigger factor (434 aa).

In terms of domain architecture, PPIase FKBP-type spans 161–246 (EDRATIDFSG…LKKVEERELP (86 aa)).

Belongs to the FKBP-type PPIase family. Tig subfamily.

Its subcellular location is the cytoplasm. It carries out the reaction [protein]-peptidylproline (omega=180) = [protein]-peptidylproline (omega=0). Involved in protein export. Acts as a chaperone by maintaining the newly synthesized protein in an open conformation. Functions as a peptidyl-prolyl cis-trans isomerase. The chain is Trigger factor from Erwinia tasmaniensis (strain DSM 17950 / CFBP 7177 / CIP 109463 / NCPPB 4357 / Et1/99).